The sequence spans 907 residues: Protein translocase subunit SecA (907 aa).

ATP-binding positions include Gln-87, 105–109 (GEGKT), and Asp-512. Positions 862–885 (AENQLDDGHSSDQNHSPMVRDERK) are disordered. Positions 867-885 (DDGHSSDQNHSPMVRDERK) are enriched in basic and acidic residues. Positions 892, 894, 903, and 904 each coordinate Zn(2+).

The protein belongs to the SecA family. Monomer and homodimer. Part of the essential Sec protein translocation apparatus which comprises SecA, SecYEG and auxiliary proteins SecDF-YajC and YidC. Zn(2+) is required as a cofactor.

The protein localises to the cell inner membrane. It localises to the cytoplasm. It carries out the reaction ATP + H2O + cellular proteinSide 1 = ADP + phosphate + cellular proteinSide 2.. Part of the Sec protein translocase complex. Interacts with the SecYEG preprotein conducting channel. Has a central role in coupling the hydrolysis of ATP to the transfer of proteins into and across the cell membrane, serving both as a receptor for the preprotein-SecB complex and as an ATP-driven molecular motor driving the stepwise translocation of polypeptide chains across the membrane. This chain is Protein translocase subunit SecA, found in Aliivibrio salmonicida (strain LFI1238) (Vibrio salmonicida (strain LFI1238)).